A 327-amino-acid chain; its full sequence is Aspartate carbamoyltransferase catalytic subunit (327 aa).

Positions 67 and 68 each coordinate carbamoyl phosphate. K95 serves as a coordination point for L-aspartate. Carbamoyl phosphate contacts are provided by R117, H145, and Q148. 2 residues coordinate L-aspartate: R178 and R232. Residues G273 and P274 each coordinate carbamoyl phosphate.

It belongs to the aspartate/ornithine carbamoyltransferase superfamily. ATCase family. Heterododecamer (2C3:3R2) of six catalytic PyrB chains organized as two trimers (C3), and six regulatory PyrI chains organized as three dimers (R2).

It carries out the reaction carbamoyl phosphate + L-aspartate = N-carbamoyl-L-aspartate + phosphate + H(+). It participates in pyrimidine metabolism; UMP biosynthesis via de novo pathway; (S)-dihydroorotate from bicarbonate: step 2/3. Catalyzes the condensation of carbamoyl phosphate and aspartate to form carbamoyl aspartate and inorganic phosphate, the committed step in the de novo pyrimidine nucleotide biosynthesis pathway. This is Aspartate carbamoyltransferase catalytic subunit from Parvibaculum lavamentivorans (strain DS-1 / DSM 13023 / NCIMB 13966).